Consider the following 189-residue polypeptide: dCTP deaminase, dUMP-forming (189 aa).

Residues 101–106, aspartate 119, 127–129, glutamine 148, tyrosine 162, and glutamine 174 contribute to the dCTP site; these read KSSLGR and TLE. Residue glutamate 129 is the Proton donor/acceptor of the active site.

It belongs to the dCTP deaminase family. As to quaternary structure, homotrimer.

The enzyme catalyses dCTP + 2 H2O = dUMP + NH4(+) + diphosphate. It participates in pyrimidine metabolism; dUMP biosynthesis; dUMP from dCTP: step 1/1. Its function is as follows. Bifunctional enzyme that catalyzes both the deamination of dCTP to dUTP and the hydrolysis of dUTP to dUMP without releasing the toxic dUTP intermediate. The sequence is that of dCTP deaminase, dUMP-forming from Rhodococcus jostii (strain RHA1).